Reading from the N-terminus, the 163-residue chain is Neurotrophin-3 (163 aa).

Positions 1-3 are cleaved as a signal peptide; sequence IQS. Residues 4 to 119 constitute a propeptide that is removed on maturation; it reads TSMDQGILTE…VLNRTSRRKR (116 aa). Asn-112 carries N-linked (GlcNAc...) asparagine glycosylation. A disordered region spans residues 113-133; that stretch reads RTSRRKREGKSHRGEYSVCDS. Positions 123–133 are enriched in basic and acidic residues; it reads SHRGEYSVCDS.

Belongs to the NGF-beta family.

Its subcellular location is the secreted. Seems to promote the survival of visceral and proprioceptive sensory neurons. In Charina bottae (Northern rubber boa), this protein is Neurotrophin-3 (NTF3).